We begin with the raw amino-acid sequence, 186 residues long: MKLLIDFFPIILFFAAFKVWGIYVATAVAIAATVVQIGYIRLKHGKVEPLQWLSLGVIVLFGGATLLAHSETFIKWKPTVLYWLMGGTLLVGQLMFRKNFIQSLMGAQIDLPAPVWRNLNWGWTGFFATMGVLNLWVAYHFDTDTWVNFKLFGGIGLMFAFVIAQALYLSRHVKDEGDAAPKDLQP.

The next 5 helical transmembrane spans lie at isoleucine 10–isoleucine 30, valine 47–leucine 67, tryptophan 76–phenylalanine 96, tryptophan 121–phenylalanine 141, and phenylalanine 149–leucine 169.

It belongs to the YciB family.

It is found in the cell inner membrane. Plays a role in cell envelope biogenesis, maintenance of cell envelope integrity and membrane homeostasis. The polypeptide is Inner membrane-spanning protein YciB (Acidovorax ebreus (strain TPSY) (Diaphorobacter sp. (strain TPSY))).